The chain runs to 68 residues: Large ribosomal subunit protein bL32 (68 aa).

It belongs to the bacterial ribosomal protein bL32 family.

The protein is Large ribosomal subunit protein bL32 of Aster yellows witches'-broom phytoplasma (strain AYWB).